The sequence spans 353 residues: Purine nucleoside phosphorylase (353 aa).

Over residues 1–16 (MSKFSYLQNGKASTNG) the composition is skewed to polar residues. The tract at residues 1-42 (MSKFSYLQNGKASTNGVPHANGHHQQHQNGHSNGVARNGGTA) is disordered. Residues Ser-98, His-129, 149–151 (RFH), and Ala-181 each bind phosphate. Glu-266 contacts a purine D-ribonucleoside. Residue Ser-285 participates in phosphate binding. An a purine D-ribonucleoside-binding site is contributed by Asn-308.

Belongs to the PNP/MTAP phosphorylase family. In terms of assembly, homotrimer.

The enzyme catalyses inosine + phosphate = alpha-D-ribose 1-phosphate + hypoxanthine. It catalyses the reaction guanosine + phosphate = alpha-D-ribose 1-phosphate + guanine. The catalysed reaction is 2'-deoxyguanosine + phosphate = 2-deoxy-alpha-D-ribose 1-phosphate + guanine. It carries out the reaction 2'-deoxyinosine + phosphate = 2-deoxy-alpha-D-ribose 1-phosphate + hypoxanthine. It participates in purine metabolism; purine nucleoside salvage. Its activity is regulated as follows. Inhibited by 5'-deaza-1'-aza-2c-deoxy-1'-(9-methylene) immucillin-H (DADMe-ImmH). Its function is as follows. As part of the purine salvage pathway, catalyzes the phosphorolytic breakdown of the N-glycosidic bond in the beta-(deoxy)ribonucleoside molecules, with the formation of the corresponding free purine bases and pentose-1-phosphate. Preferentially acts on 2'-deoxyinosine and inosine, and to a lesser extent on 2'-deoxyguanosine and guanosine. Has no activity towards adenosine or 2'-deoxyadenosine. This is Purine nucleoside phosphorylase from Anopheles gambiae (African malaria mosquito).